Here is a 495-residue protein sequence, read N- to C-terminus: NAD(+)--protein-arginine ADP-ribosyltransferase Tre1 (495 aa).

The tract at residues 278–309 is disordered; it reads PDLQIKGPTPVKKPEPLQPARQPEKASAPKPV. The 181-residue stretch at 315 to 495 folds into the TR mART core domain; that stretch reads MSLREAVGNQ…VTQFILKEIP (181 aa). Residues 344–495 are ART domain; it reads RSALLTDDQI…VTQFILKEIP (152 aa). Residues Arg406, Ser431, and Glu466 contribute to the active site.

Belongs to the Arg-specific ADP-ribosyltransferase family.

Its subcellular location is the secreted. The protein localises to the host cytoplasm. It catalyses the reaction L-arginyl-[protein] + NAD(+) = N(omega)-(ADP-D-ribosyl)-L-arginyl-[protein] + nicotinamide + H(+). Its function is as follows. Toxic component of a contact-dependent interbacterial competition system (also called effector-immunity systems). Acts by ADP-ribosylating a number of target proteins in target cells; E.coli target proteins include FtsZ, EFTu, RNase E, Fis, YegQ, GuaB and IF2. This Pseudomonas putida (strain GB-1) protein is NAD(+)--protein-arginine ADP-ribosyltransferase Tre1.